Consider the following 123-residue polypeptide: Small ribosomal subunit protein uS12cz/uS12cy (123 aa).

It belongs to the universal ribosomal protein uS12 family. As to quaternary structure, part of the 30S ribosomal subunit.

It is found in the plastid. Its subcellular location is the chloroplast. Its function is as follows. With S4 and S5 plays an important role in translational accuracy. Located at the interface of the 30S and 50S subunits. This Daucus carota (Wild carrot) protein is Small ribosomal subunit protein uS12cz/uS12cy (rps12-A).